The following is a 336-amino-acid chain: Malate dehydrogenase, cytoplasmic (336 aa).

NAD(+) contacts are provided by residues 11-17 (GAAGQIG) and aspartate 42. 2 residues coordinate substrate: arginine 92 and arginine 98. NAD(+)-binding positions include asparagine 105, glutamine 112, and 129 to 131 (VGN). The substrate site is built by asparagine 131 and arginine 163. Histidine 188 (proton acceptor) is an active-site residue.

It belongs to the LDH/MDH superfamily. MDH type 2 family. As to quaternary structure, homodimer.

Its subcellular location is the cytoplasm. The catalysed reaction is (S)-malate + NAD(+) = oxaloacetate + NADH + H(+). Catalyzes the reversible conversion of (S)-malate to oxaloacetate in the cytoplasm where oxaloacetate is used for gluconeogenesis. The protein is Malate dehydrogenase, cytoplasmic of Caenorhabditis elegans.